An 85-amino-acid polypeptide reads, in one-letter code: Conotoxin Lt28.5 (85 aa).

An N-terminal signal peptide occupies residues Met-1 to Ala-21. Residues Val-22–Lys-40 constitute a propeptide that is removed on maturation.

It belongs to the conotoxin D superfamily. Contains 5 disulfide bonds. In terms of tissue distribution, expressed by the venom duct.

The protein resides in the secreted. In terms of biological role, probable neurotoxin. The polypeptide is Conotoxin Lt28.5 (Conus litteratus (Lettered cone)).